Here is a 114-residue protein sequence, read N- to C-terminus: Phycoerythrin alpha-1 subunit (114 aa).

(2R,3E)-phycoerythrobilin contacts are provided by Asp52, Ser53, Glu63, Arg64, Cys67, Thr72, Lys74, Ala75, and Lys84.

It belongs to the phycoerythrin family. Heterotetramer of 2 different alpha chains and 2 identical beta chains which form 2 alpha-beta heterodimers within the heterotetramer. The two alpha-beta heterodimers are rotated to an open configuration in contrast to the closed configuration found in other cryptophyte species due to the insertion of a single amino acid, Asp-65, in a conserved region of the alpha chain. In the open form, the central chromophores are not in physical contact but are separated by a water-filled channel. Post-translationally, contains three phycoerythrobilin chromophores with binding mediated by both the alpha and beta subunits.

Its subcellular location is the plastid. It localises to the chloroplast thylakoid membrane. In terms of biological role, light-harvesting photosynthetic tetrapyrrole chromophore-protein from the phycobiliprotein complex. The sequence is that of Phycoerythrin alpha-1 subunit from Hemiselmis andersenii (Cryptophyte alga).